We begin with the raw amino-acid sequence, 259 residues long: 1,2-dihydroxy-1,2-dihydronaphthalene dehydrogenase (259 aa).

8 to 32 (SITGAGSGIGLELVRSFKSAGYYVS) provides a ligand contact to NAD(+). Serine 140 contacts substrate. Tyrosine 153 functions as the Proton acceptor in the catalytic mechanism.

It belongs to the short-chain dehydrogenases/reductases (SDR) family.

It catalyses the reaction (1R,2S)-1,2-dihydronaphthalene-1,2-diol + NAD(+) = naphthalene-1,2-diol + NADH + H(+). It carries out the reaction cis-1,2-dihydroxy-1,2-dihydrodibenzothiophene + NAD(+) = 1,2-dihydroxydibenzothiophene + NADH + H(+). The protein operates within aromatic compound metabolism; naphthalene degradation. Its function is as follows. Catalyzes the oxidation of naphthalene dihydrodiol into 1,2-dihydroxynaphthalene. The polypeptide is 1,2-dihydroxy-1,2-dihydronaphthalene dehydrogenase (doxE) (Pseudomonas sp. (strain C18)).